The chain runs to 154 residues: Probable chemoreceptor glutamine deamidase CheD (154 aa).

It belongs to the CheD family.

The enzyme catalyses L-glutaminyl-[protein] + H2O = L-glutamyl-[protein] + NH4(+). Its function is as follows. Probably deamidates glutamine residues to glutamate on methyl-accepting chemotaxis receptors (MCPs), playing an important role in chemotaxis. This chain is Probable chemoreceptor glutamine deamidase CheD, found in Methanococcus maripaludis (strain DSM 14266 / JCM 13030 / NBRC 101832 / S2 / LL).